Consider the following 77-residue polypeptide: Large ribosomal subunit protein bL28 (77 aa).

It belongs to the bacterial ribosomal protein bL28 family.

The polypeptide is Large ribosomal subunit protein bL28 (Leptothrix cholodnii (strain ATCC 51168 / LMG 8142 / SP-6) (Leptothrix discophora (strain SP-6))).